Reading from the N-terminus, the 61-residue chain is UPF0434 protein PSPA7_2181 (61 aa).

It belongs to the UPF0434 family.

The polypeptide is UPF0434 protein PSPA7_2181 (Pseudomonas paraeruginosa (strain DSM 24068 / PA7) (Pseudomonas aeruginosa (strain PA7))).